A 98-amino-acid chain; its full sequence is DNA-binding protein Fis (98 aa).

A DNA-binding region (H-T-H motif) is located at residues 74–93 (QTRAALMMGINRGTLRKKLK).

Belongs to the transcriptional regulatory Fis family. Homodimer.

Activates ribosomal RNA transcription. Plays a direct role in upstream activation of rRNA promoters. This Yersinia enterocolitica serotype O:8 / biotype 1B (strain NCTC 13174 / 8081) protein is DNA-binding protein Fis.